Reading from the N-terminus, the 72-residue chain is Translation initiation factor IF-1 (72 aa).

One can recognise an S1-like domain in the interval 1–72 (MAKEDCIEME…TKGRIKFRSK (72 aa)).

The protein belongs to the IF-1 family. In terms of assembly, component of the 30S ribosomal translation pre-initiation complex which assembles on the 30S ribosome in the order IF-2 and IF-3, IF-1 and N-formylmethionyl-tRNA(fMet); mRNA recruitment can occur at any time during PIC assembly.

The protein localises to the cytoplasm. Functionally, one of the essential components for the initiation of protein synthesis. Stabilizes the binding of IF-2 and IF-3 on the 30S subunit to which N-formylmethionyl-tRNA(fMet) subsequently binds. Helps modulate mRNA selection, yielding the 30S pre-initiation complex (PIC). Upon addition of the 50S ribosomal subunit IF-1, IF-2 and IF-3 are released leaving the mature 70S translation initiation complex. The sequence is that of Translation initiation factor IF-1 from Francisella tularensis subsp. tularensis (strain WY96-3418).